Reading from the N-terminus, the 177-residue chain is MPEMVPAWVDGRLMPVEKLEAHQRGLRHKAISVFVMAGESVLIQRRAAGKYHTPGLWANTCCTHPRWGEAAADCAVRRLREELGITGLVTVFADQVEYRADVGSGLIEHEVVDIFVAEAPQDLPVAPDPEEVWETRWVDLHDLAREVEEHPERFTPWLRIYLADHMERIFGKLRVVQ.

Mn(2+)-binding residues include histidine 22 and histidine 28. One can recognise a Nudix hydrolase domain in the interval 26-160 (LRHKAISVFV…PERFTPWLRI (135 aa)). The active site involves cysteine 62. Histidine 64 contacts Mn(2+). A Mg(2+)-binding site is contributed by glutamate 82. Positions 108 and 110 each coordinate Mn(2+). Residue glutamate 110 is part of the active site.

The protein belongs to the IPP isomerase type 1 family. It depends on Mg(2+) as a cofactor. Mn(2+) is required as a cofactor.

It localises to the cytoplasm. The enzyme catalyses isopentenyl diphosphate = dimethylallyl diphosphate. It functions in the pathway isoprenoid biosynthesis; dimethylallyl diphosphate biosynthesis; dimethylallyl diphosphate from isopentenyl diphosphate: step 1/1. It participates in porphyrin-containing compound metabolism; chlorophyll biosynthesis. In terms of biological role, catalyzes the 1,3-allylic rearrangement of the homoallylic substrate isopentenyl (IPP) to its highly electrophilic allylic isomer, dimethylallyl diphosphate (DMAPP). The sequence is that of Isopentenyl-diphosphate Delta-isomerase from Cereibacter sphaeroides (strain ATCC 17025 / ATH 2.4.3) (Rhodobacter sphaeroides).